The chain runs to 604 residues: MSVIQTPNGYKLDNSGRRVVVDPVTRIEGHMRCEVNVDSNNVIRNAVSTGTMWRGLEVILKGRDPRDAWAFVERICGVCTGCHALASVRAVENALDIRIPPNAHLIREIMAKVLQWHDHVVHFYHLHALDWVNPVNALKADPKATSELQQLVGPNHPMSSPGYFRDIQNRLKRFVESGELGIFKNGYWDNPAYKLSPEADLMATAHYLEALDIQKEIVKIHTIFGGKNPHPNFMVGGVPCAINMDGDLAAGAPLNMERLNFVRARIEEAYEFSKNVYIPDVIAIATFYKGWLYGGGLSATNVMDYGDYAKVNYDKSTDQLKGGAILNGNWNEVFPVDAADPEQIQEFVAHSWYKYPDEAKGLHPWDGVTEHNYALGPNTKGTRTDIKQLDEAAKYSWIKSPRWRGHAVEVGPLSRYILNYAQGNQYVIEQVDSSLAAFNKLAGTNLTPKQALPSTIGRTLARALEAHYCAAMMLDDWKELIGNIKAGDSSTANVEKWDPSTWPKEAKGYGLVAAPRGANGHWIRIKDGKIANYQCIVPTTWNGSPRDPAGNIGAFEASLMNTPMERPEEPVEILRTLHSFDPCLACSTHVMSEDGENLAKVTVR.

Ni(2+) contacts are provided by cysteine 76, cysteine 79, cysteine 583, and cysteine 586.

It belongs to the [NiFe]/[NiFeSe] hydrogenase large subunit family. Heterodimer of a large and a small subunit. Ni(2+) serves as cofactor.

It is found in the cell membrane. The catalysed reaction is H2 + A = AH2. In terms of biological role, this enzyme recycles the H(2) produced by nitrogenase to increase the production of ATP and to protect nitrogenase against inhibition or damage by O(2) under carbon- or phosphate-limited conditions. The polypeptide is Uptake hydrogenase large subunit (hoxL) (Afipia carboxidovorans (strain ATCC 49405 / DSM 1227 / KCTC 32145 / OM5) (Oligotropha carboxidovorans)).